Reading from the N-terminus, the 64-residue chain is Beta-insect excitatory toxin OdTx12 (64 aa).

An LCN-type CS-alpha/beta domain is found at 1 to 59; the sequence is QSTGGKAPECLLSNYCNNECTKVHYADKGYCCLLSCYCFGLSDDKKVLEISDSRKKYCD. Disulfide bonds link Cys-10/Cys-31, Cys-16/Cys-36, Cys-20/Cys-38, and Cys-32/Cys-58.

It belongs to the long (4 C-C) scorpion toxin superfamily. Sodium channel inhibitor family. Beta subfamily. Expressed by the venom gland.

It is found in the secreted. Its function is as follows. Excitatory insect beta-toxins induce a spastic paralysis. They bind voltage-independently at site-4 of sodium channels (Nav) and shift the voltage of activation toward more negative potentials thereby affecting sodium channel activation and promoting spontaneous and repetitive firing. In vivo, this recombinant protein is lethal to Locusta migratoria larvae after injection, but has no significant effect when orally administered. Is not toxic to mice after intracerebroventricular injection. This is Beta-insect excitatory toxin OdTx12 from Odontobuthus doriae (Yellow Iranian scorpion).